Reading from the N-terminus, the 153-residue chain is Endoribonuclease YbeY (153 aa).

Residues His-114, His-118, and His-124 each contribute to the Zn(2+) site.

Belongs to the endoribonuclease YbeY family. It depends on Zn(2+) as a cofactor.

Its subcellular location is the cytoplasm. Functionally, single strand-specific metallo-endoribonuclease involved in late-stage 70S ribosome quality control and in maturation of the 3' terminus of the 16S rRNA. The chain is Endoribonuclease YbeY from Shewanella baltica (strain OS195).